We begin with the raw amino-acid sequence, 390 residues long: Scoulerine-9-O-methyltransferase 1 (390 aa).

Glu-153 is a substrate binding site. S-adenosyl-L-methionine-binding positions include Met-207, Ser-211, Gly-235, Asp-258, 278–279 (DM), and Lys-292. The Proton acceptor role is filled by His-296. 296 to 297 (HD) contacts substrate.

This sequence belongs to the class I-like SAM-binding methyltransferase superfamily. Cation-independent O-methyltransferase family. COMT subfamily. Homodimer. In terms of tissue distribution, highly expressed in capsules. Expressed is stems. Expressed at low levels in roots.

The catalysed reaction is (S)-scoulerine + S-adenosyl-L-methionine = (S)-tetrahydrocolumbamine + S-adenosyl-L-homocysteine + H(+). It carries out the reaction (S)-tetrahydrocolumbamine + S-adenosyl-L-methionine = (S)-tetrahydropalmatine + S-adenosyl-L-homocysteine + H(+). It catalyses the reaction (S)-norreticuline + S-adenosyl-L-methionine = (S)-norcodamine + S-adenosyl-L-homocysteine + H(+). The enzyme catalyses (S)-reticuline + S-adenosyl-L-methionine = (S)-codamine + S-adenosyl-L-homocysteine + H(+). It participates in alkaloid biosynthesis. Functionally, methyltransferase involved in the biosynthesis of the benzylisoquinoline alkaloid noscapine. Catalyzes the conversion of (S)-scoulerine to (S)-tetrahydrocolumbamine. Can convert (S)-tetrahydrocolumbamine to tetrahydropalmatine. Can convert (S)-norreticuline to (S)-norcodamine. Can convert (S)-reticuline to (S)-codamine. Substrate preference is (S)-scoulerine &gt; (S)-tetrahydrocolumbamine &gt; (S)-norreticuline &gt; (S)-reticuline. In Papaver somniferum (Opium poppy), this protein is Scoulerine-9-O-methyltransferase 1.